The chain runs to 186 residues: Peptide deformylase (186 aa).

Positions 113 and 156 each coordinate Fe cation. The active site involves glutamate 157. Position 160 (histidine 160) interacts with Fe cation.

The protein belongs to the polypeptide deformylase family. Requires Fe(2+) as cofactor.

The enzyme catalyses N-terminal N-formyl-L-methionyl-[peptide] + H2O = N-terminal L-methionyl-[peptide] + formate. Its function is as follows. Removes the formyl group from the N-terminal Met of newly synthesized proteins. Requires at least a dipeptide for an efficient rate of reaction. N-terminal L-methionine is a prerequisite for activity but the enzyme has broad specificity at other positions. The chain is Peptide deformylase from Limosilactobacillus reuteri (strain DSM 20016) (Lactobacillus reuteri).